Here is a 212-residue protein sequence, read N- to C-terminus: ATP synthase F(0) complex subunit a (212 aa).

Helical transmembrane passes span 3 to 23, 58 to 78, 87 to 107, 128 to 148, 154 to 174, and 179 to 199; these read MMGIPLILIAIILPMLLMFTS, WAAMLITLMIFLLSMNMLGLL, QLSMNMALAAPLWLATVLTGL, IPLLIIIETVSLFIRPLALGV, LTAGHLLIQLISTAAFVLMPT, and ALSTLIVLMLLTGLEIAVAMI.

The protein belongs to the ATPase A chain family. As to quaternary structure, component of the ATP synthase complex composed at least of ATP5F1A/subunit alpha, ATP5F1B/subunit beta, ATP5MC1/subunit c (homooctomer), MT-ATP6/subunit a, MT-ATP8/subunit 8, ATP5ME/subunit e, ATP5MF/subunit f, ATP5MG/subunit g, ATP5MK/subunit k, ATP5MJ/subunit j, ATP5F1C/subunit gamma, ATP5F1D/subunit delta, ATP5F1E/subunit epsilon, ATP5PF/subunit F6, ATP5PB/subunit b, ATP5PD/subunit d, ATP5PO/subunit OSCP. ATP synthase complex consists of a soluble F(1) head domain (subunits alpha(3) and beta(3)) - the catalytic core - and a membrane F(0) domain - the membrane proton channel (subunits c, a, 8, e, f, g, k and j). These two domains are linked by a central stalk (subunits gamma, delta, and epsilon) rotating inside the F1 region and a stationary peripheral stalk (subunits F6, b, d, and OSCP). Interacts with DNAJC30; interaction is direct.

It is found in the mitochondrion inner membrane. It carries out the reaction H(+)(in) = H(+)(out). Its function is as follows. Subunit a, of the mitochondrial membrane ATP synthase complex (F(1)F(0) ATP synthase or Complex V) that produces ATP from ADP in the presence of a proton gradient across the membrane which is generated by electron transport complexes of the respiratory chain. ATP synthase complex consist of a soluble F(1) head domain - the catalytic core - and a membrane F(1) domain - the membrane proton channel. These two domains are linked by a central stalk rotating inside the F(1) region and a stationary peripheral stalk. During catalysis, ATP synthesis in the catalytic domain of F(1) is coupled via a rotary mechanism of the central stalk subunits to proton translocation. With the subunit c (ATP5MC1), forms the proton-conducting channel in the F(0) domain, that contains two crucial half-channels (inlet and outlet) that facilitate proton movement from the mitochondrial intermembrane space (IMS) into the matrix. Protons are taken up via the inlet half-channel and released through the outlet half-channel, following a Grotthuss mechanism. This chain is ATP synthase F(0) complex subunit a, found in Tropidurus montanus (Lizard).